The following is a 599-amino-acid chain: MAVSASPVISATSSGAGVPGGLFRAEPLYSTPREPPRLTPNMINSFVVNNHSNSAGGGGRGNTNTNECRMVDMHGMKVASFLMDGQELICLPQVFDLFLKHLVGGLHTVYTKLKRLDISPVVCTVEQVRILRGLGAIQPGVNRCKLITRKDFETLFTDCTNARRKRQMTRKQAVNSSRPGRPPKRSLGVLQENARLLTHAVPGLLSPGLITPTGITAAAMAEAMKLQKMKLMAMNTLQGNGSQNGTESEPDDLNSNTGGSESSWDKDKMQSPFAAPGPQHGIAHAALAGQPGIGGAPTLNPLQQNHLLTNRLDLPFMMMPHPLLPVSLPPASVAMAMNQMNHLNTIANMAAAAQIHSPLSRAGTSVIKERIPESPSPAPSLEENHRPGSQTSSHTSSSVSSSPSQMDHHLERMEEVPVQIPIMKSPLDKIQLTPGQALPAGFPGPFIFADSLSSVETLLTNIQGLLKVALDNARIQEKQIQQEKKELRLELYREREIRENLERQLAVELQSRTTMQKRLKKEKKTKRKLQEALEFESKRREQVEQALKQATTSDSGLRMLKDTGIPDIEIENNGTPHDSAAMQGGNYYCLEMAQQLYSA.

Residues 69–155 are DACHbox-N; the sequence is RMVDMHGMKV…LITRKDFETL (87 aa). Disordered regions lie at residues 166 to 186, 237 to 280, and 370 to 409; these read RQMT…PKRS, LQGN…GPQH, and RIPE…MDHH. Polar residues predominate over residues 237–262; sequence LQGNGSQNGTESEPDDLNSNTGGSES. Positions 389-405 are enriched in low complexity; sequence SQTSSHTSSSVSSSPSQ. The tract at residues 453–533 is DACHbox-C; that stretch reads SSVETLLTNI…KTKRKLQEAL (81 aa). Residues 459–554 adopt a coiled-coil conformation; sequence LTNIQGLLKV…QALKQATTSD (96 aa).

It belongs to the DACH/dachshund family. As to quaternary structure, interacts with SIX6 and EYA2.

The protein localises to the nucleus. Functionally, transcription factor that is involved in regulation of organogenesis. Seems to be a regulator for SIX1 and SIX6. Seems to act as a corepressor of SIX6 in regulating proliferation by directly repressing cyclin-dependent kinase inhibitors, including the p27Kip1 promoter. Is recruited with SIX6 to the p27Kip1 promoter in embryonal retina. SIX6 corepression also seems to involve NCOR1, TBL1, HDAC1 and HDAC3. May be involved together with PAX3, SIX1, and EYA2 in regulation of myogenesis. In the developing somite, expression of DACH2 and PAX3 is regulated by the overlying ectoderm, and DACH2 and PAX3 positively regulate each other's expression. Probably binds to DNA via its DACHbox-N domain. This Homo sapiens (Human) protein is Dachshund homolog 2 (DACH2).